The sequence spans 458 residues: uncharacterized protein (458 aa).

It belongs to the glycerate kinase type-2 family.

This is an uncharacterized protein from Caenorhabditis elegans.